A 201-amino-acid polypeptide reads, in one-letter code: UPF0301 protein ROP_34500 (201 aa).

Belongs to the UPF0301 (AlgH) family.

The protein is UPF0301 protein ROP_34500 of Rhodococcus opacus (strain B4).